The following is a 140-amino-acid chain: Flagellar assembly factor FliW (140 aa).

It belongs to the FliW family. In terms of assembly, interacts with translational regulator CsrA and flagellin(s).

It is found in the cytoplasm. Its function is as follows. Acts as an anti-CsrA protein, binds CsrA and prevents it from repressing translation of its target genes, one of which is flagellin. Binds to flagellin and participates in the assembly of the flagellum. The sequence is that of Flagellar assembly factor FliW from Syntrophotalea carbinolica (strain DSM 2380 / NBRC 103641 / GraBd1) (Pelobacter carbinolicus).